A 342-amino-acid polypeptide reads, in one-letter code: UDP-3-O-acylglucosamine N-acyltransferase (342 aa).

His241 serves as the catalytic Proton acceptor.

The protein belongs to the transferase hexapeptide repeat family. LpxD subfamily. In terms of assembly, homotrimer.

The catalysed reaction is a UDP-3-O-[(3R)-3-hydroxyacyl]-alpha-D-glucosamine + a (3R)-hydroxyacyl-[ACP] = a UDP-2-N,3-O-bis[(3R)-3-hydroxyacyl]-alpha-D-glucosamine + holo-[ACP] + H(+). The protein operates within bacterial outer membrane biogenesis; LPS lipid A biosynthesis. Functionally, catalyzes the N-acylation of UDP-3-O-acylglucosamine using 3-hydroxyacyl-ACP as the acyl donor. Is involved in the biosynthesis of lipid A, a phosphorylated glycolipid that anchors the lipopolysaccharide to the outer membrane of the cell. This is UDP-3-O-acylglucosamine N-acyltransferase from Pasteurella multocida (strain Pm70).